Here is a 360-residue protein sequence, read N- to C-terminus: Protein Wnt-2 (360 aa).

The N-terminal stretch at 1–26 is a signal peptide; it reads MNAPLGGIWLWLPLLLTWLTPEVSSS. 11 disulfides stabilise this stretch: cysteine 76–cysteine 87, cysteine 127–cysteine 135, cysteine 137–cysteine 157, cysteine 206–cysteine 220, cysteine 208–cysteine 215, cysteine 278–cysteine 309, cysteine 294–cysteine 304, cysteine 308–cysteine 348, cysteine 324–cysteine 339, cysteine 326–cysteine 336, and cysteine 331–cysteine 332. Serine 212 carries the O-palmitoleoyl serine; by PORCN lipid modification. N-linked (GlcNAc...) asparagine glycosylation occurs at asparagine 295.

Belongs to the Wnt family. In terms of processing, palmitoleoylation is required for efficient binding to frizzled receptors. Depalmitoleoylation leads to Wnt signaling pathway inhibition.

The protein resides in the secreted. The protein localises to the extracellular space. It is found in the extracellular matrix. Functionally, ligand for members of the frizzled family of seven transmembrane receptors. Probable developmental protein. May be a signaling molecule which affects the development of discrete regions of tissues. Is likely to signal over only few cell diameters. The polypeptide is Protein Wnt-2 (WNT2) (Eulemur macaco macaco (Black lemur)).